A 176-amino-acid polypeptide reads, in one-letter code: Disulfide bond formation protein B (176 aa).

The Cytoplasmic segment spans residues 1 to 14; sequence MLQFLNRCSRGRGA. The helical transmembrane segment at 15 to 31 threads the bilayer; sequence WLLMALTAFLLELTALY. Residues 32–49 are Periplasmic-facing; that stretch reads FQHIMLLQPCVMCIYERV. Cysteines 41 and 44 form a disulfide. A helical membrane pass occupies residues 50 to 65; it reads ALFGILGASLLGAIAP. Over 66 to 71 the chain is Cytoplasmic; sequence RSPLRY. The helical transmembrane segment at 72–89 threads the bilayer; that stretch reads LAIAVWIYSAWKGVQLAW. Topologically, residues 90–144 are periplasmic; that stretch reads AHTMLQLNPSPFNTCDFFVNFPSWLPLDKWLPAVFAASGDCSERQWQFMSLEMPQ. C104 and C130 are joined by a disulfide. The chain crosses the membrane as a helical span at residues 145–163; it reads WLVGIFAAYLVIAVLVLIS. Topologically, residues 164-176 are cytoplasmic; that stretch reads QFVKPKRRDLFGR.

It belongs to the DsbB family.

Its subcellular location is the cell inner membrane. Required for disulfide bond formation in some periplasmic proteins. Acts by oxidizing the DsbA protein. The polypeptide is Disulfide bond formation protein B (Yersinia pestis bv. Antiqua (strain Nepal516)).